A 257-amino-acid chain; its full sequence is Pyridoxal phosphate homeostasis protein (257 aa).

An N6-(pyridoxal phosphate)lysine modification is found at lysine 47.

The protein belongs to the pyridoxal phosphate-binding protein YggS/PROSC family.

Functionally, pyridoxal 5'-phosphate (PLP)-binding protein, which is involved in PLP homeostasis. In Mycobacterium leprae (strain TN), this protein is Pyridoxal phosphate homeostasis protein.